Reading from the N-terminus, the 252-residue chain is Triosephosphate isomerase (252 aa).

10–12 (NWK) lines the substrate pocket. H96 functions as the Electrophile in the catalytic mechanism. Catalysis depends on E168, which acts as the Proton acceptor. Residues G174, S214, and 235 to 236 (GG) contribute to the substrate site.

The protein belongs to the triosephosphate isomerase family. In terms of assembly, homodimer.

It is found in the cytoplasm. It catalyses the reaction D-glyceraldehyde 3-phosphate = dihydroxyacetone phosphate. It participates in carbohydrate biosynthesis; gluconeogenesis. Its pathway is carbohydrate degradation; glycolysis; D-glyceraldehyde 3-phosphate from glycerone phosphate: step 1/1. Involved in the gluconeogenesis. Catalyzes stereospecifically the conversion of dihydroxyacetone phosphate (DHAP) to D-glyceraldehyde-3-phosphate (G3P). The sequence is that of Triosephosphate isomerase from Streptococcus pyogenes serotype M5 (strain Manfredo).